The following is a 256-amino-acid chain: Triosephosphate isomerase (256 aa).

Position 9–11 (9–11 (NWK)) interacts with substrate. Catalysis depends on His95, which acts as the Electrophile. The active-site Proton acceptor is Glu167. Substrate is bound by residues Gly173, Ser213, and 234–235 (GG).

The protein belongs to the triosephosphate isomerase family. As to quaternary structure, homodimer.

The protein localises to the cytoplasm. The enzyme catalyses D-glyceraldehyde 3-phosphate = dihydroxyacetone phosphate. Its pathway is carbohydrate biosynthesis; gluconeogenesis. It functions in the pathway carbohydrate degradation; glycolysis; D-glyceraldehyde 3-phosphate from glycerone phosphate: step 1/1. In terms of biological role, involved in the gluconeogenesis. Catalyzes stereospecifically the conversion of dihydroxyacetone phosphate (DHAP) to D-glyceraldehyde-3-phosphate (G3P). This is Triosephosphate isomerase from Symbiobacterium thermophilum (strain DSM 24528 / JCM 14929 / IAM 14863 / T).